A 904-amino-acid polypeptide reads, in one-letter code: Phosphoenolpyruvate carboxylase (904 aa).

Residues histidine 151 and lysine 570 contribute to the active site.

Belongs to the PEPCase type 1 family. Mg(2+) is required as a cofactor.

The catalysed reaction is oxaloacetate + phosphate = phosphoenolpyruvate + hydrogencarbonate. In terms of biological role, forms oxaloacetate, a four-carbon dicarboxylic acid source for the tricarboxylic acid cycle. In Xanthomonas campestris pv. campestris (strain ATCC 33913 / DSM 3586 / NCPPB 528 / LMG 568 / P 25), this protein is Phosphoenolpyruvate carboxylase.